Consider the following 174-residue polypeptide: Probable phenolic acid decarboxylase (174 aa).

The protein belongs to the PadC family.

Catalyzes the decarboxylation of phenolic acids. The protein is Probable phenolic acid decarboxylase (padC) of Vibrio cholerae serotype O1 (strain ATCC 39315 / El Tor Inaba N16961).